The following is a 388-amino-acid chain: Nitric oxide reductase FlRd-NAD(+) reductase (388 aa).

It belongs to the FAD-dependent oxidoreductase family. FAD serves as cofactor.

It is found in the cytoplasm. It carries out the reaction 2 reduced [nitric oxide reductase rubredoxin domain] + NAD(+) + H(+) = 2 oxidized [nitric oxide reductase rubredoxin domain] + NADH. Its pathway is nitrogen metabolism; nitric oxide reduction. One of at least two accessory proteins for anaerobic nitric oxide (NO) reductase. Reduces the rubredoxin moiety of NO reductase. The sequence is that of Nitric oxide reductase FlRd-NAD(+) reductase from Aeromonas hydrophila subsp. hydrophila (strain ATCC 7966 / DSM 30187 / BCRC 13018 / CCUG 14551 / JCM 1027 / KCTC 2358 / NCIMB 9240 / NCTC 8049).